Consider the following 242-residue polypeptide: Ribonuclease 3 (242 aa).

Positions 12-139 constitute an RNase III domain; that stretch reads ANELLEALGT…LIGATFLEHG (128 aa). Mg(2+) is bound at residue Glu-51. Asp-55 is an active-site residue. Residues Asp-125 and Glu-128 each coordinate Mg(2+). Glu-128 is a catalytic residue. Residues 165-236 enclose the DRBM domain; it reads LDWKTSLTVK…AEAGWKSLDS (72 aa).

It belongs to the ribonuclease III family. Homodimer. It depends on Mg(2+) as a cofactor.

The protein resides in the cytoplasm. It catalyses the reaction Endonucleolytic cleavage to 5'-phosphomonoester.. In terms of biological role, digests double-stranded RNA. Involved in the processing of primary rRNA transcript to yield the immediate precursors to the large and small rRNAs (23S and 16S). Processes some mRNAs, and tRNAs when they are encoded in the rRNA operon. Processes pre-crRNA and tracrRNA of type II CRISPR loci if present in the organism. This is Ribonuclease 3 from Bifidobacterium longum (strain NCC 2705).